The following is a 208-amino-acid chain: Probable GTP-binding protein EngB (208 aa).

Positions 18 to 187 (KQFEICVIGR…FALMKKVVIQ (170 aa)) constitute an EngB-type G domain. Residues 26–33 (GRSNVGKS), 52–56 (GRTQL), 69–72 (DLPG), 135–138 (NKLD), and 166–168 (VSA) contribute to the GTP site. Positions 33 and 54 each coordinate Mg(2+).

This sequence belongs to the TRAFAC class TrmE-Era-EngA-EngB-Septin-like GTPase superfamily. EngB GTPase family. It depends on Mg(2+) as a cofactor.

In terms of biological role, necessary for normal cell division and for the maintenance of normal septation. The protein is Probable GTP-binding protein EngB of Ureaplasma parvum serovar 3 (strain ATCC 27815 / 27 / NCTC 11736).